The chain runs to 74 residues: Probable molt-inhibiting hormone (74 aa).

Disulfide bonds link Cys6–Cys43, Cys23–Cys39, and Cys26–Cys52. Position 74 is an alanine amide (Ala74).

It localises to the secreted. In terms of biological role, inhibits Y-organs where molting hormone (ecdysteroid) is secreted. A molting cycle is initiated when MIH secretion diminishes or stops. Has little or no hyperglycemic activity. This chain is Probable molt-inhibiting hormone, found in Jasus lalandii (Cape rock lobster).